The sequence spans 250 residues: Ribonuclease PH (250 aa).

Phosphate-binding positions include Arg-99 and Gly-137–Arg-139.

The protein belongs to the RNase PH family. Homohexameric ring arranged as a trimer of dimers.

It catalyses the reaction tRNA(n+1) + phosphate = tRNA(n) + a ribonucleoside 5'-diphosphate. Its function is as follows. Phosphorolytic 3'-5' exoribonuclease that plays an important role in tRNA 3'-end maturation. Removes nucleotide residues following the 3'-CCA terminus of tRNAs; can also add nucleotides to the ends of RNA molecules by using nucleoside diphosphates as substrates, but this may not be physiologically important. Probably plays a role in initiation of 16S rRNA degradation (leading to ribosome degradation) during starvation. The sequence is that of Ribonuclease PH from Bordetella parapertussis (strain 12822 / ATCC BAA-587 / NCTC 13253).